Here is a 161-residue protein sequence, read N- to C-terminus: Transcriptional repressor NrdR (161 aa).

Residues 3 to 34 (CPFCGKYDTKVTDSRLVAEGDQVRRRRQCNDC) fold into a zinc finger. In terms of domain architecture, ATP-cone spans 49-139 (PRVIKGDGSR…VYRRFQDLDE (91 aa)).

It belongs to the NrdR family. Zn(2+) serves as cofactor.

In terms of biological role, negatively regulates transcription of bacterial ribonucleotide reductase nrd genes and operons by binding to NrdR-boxes. This chain is Transcriptional repressor NrdR, found in Chromohalobacter salexigens (strain ATCC BAA-138 / DSM 3043 / CIP 106854 / NCIMB 13768 / 1H11).